The following is a 557-amino-acid chain: BZIP-type transcription factor MBZ1 (557 aa).

Residues 171–194 (AKAQAQQRQQQQQQQLIQQTQRQT) show a composition bias toward low complexity. Disordered regions lie at residues 171-209 (AKAQAQQRQQQQQQQLIQQTQRQTSPKSRGKAPQPTDPI) and 221-273 (MRAK…RQLR). A compositionally biased stretch (polar residues) spans 229 to 240 (EPESQSVLNNLP). Positions 254–271 (RLLASEEGKKLSSKERRQ) are enriched in basic and acidic residues. In terms of domain architecture, bZIP spans 264 to 327 (LSSKERRQLR…KRLSDLTRML (64 aa)). The basic motif stretch occupies residues 267–286 (KERRQLRNKVSARAFRSRRK). The tract at residues 289–296 (ISQLEAEI) is leucine-zipper. The tract at residues 344-364 (PTGLPQGSPVKIEQNPQQEQN) is disordered.

The protein localises to the nucleus. In terms of biological role, BZIP-type transcription factor that functions as either an activator or a suppressor, and which contributes to the regulation of fungal growth, conidiation, cell wall integrity, and virulence. Plays a key role in virulence against insects by mediating cell wall integrity, cell surface hydrophobicity, and adherence to hydrophobic surfaces. Exhibits negative regulation of subtilisin proteases, but positive control of an adhesin gene. The protein is BZIP-type transcription factor MBZ1 of Metarhizium robertsii (strain ARSEF 23 / ATCC MYA-3075) (Metarhizium anisopliae (strain ARSEF 23)).